We begin with the raw amino-acid sequence, 739 residues long: MLKKIVTALGMSGMLLAANSAIADDKNTEMATPQSVDLSPLRNLNKLDSPMGKNYDYHQSFKKLNTEELKKDMQDLLTQSQDWWPADFGNYGPFFIRLSWHDAGTYRLADGRGGANRGQQRFSPLNSWPDNVNLDKARQLLWPIKQKYGDAVSWSDLIVLAGTVSLESMGMKPIGFAFGREDDWQGDDTNWGISPEQLMSSNVKDGKLAPAYAATQMGLIYVNPEGPDGKPDIKGAASEIRQAFRAMGMTDKETVALIAGGHTFGKTHGAVPEKDIKKDIGPAPDKAPIEQQGLGWHNSYGTGMGDDTMGSGLEGSWTSTPTFWNHDFLHNLYNLNWEKTLSPSGAHQWTPTNAKPENMVPDAHKPGVKHKPIMFTTDLALKEDDGFNKYTQEFYNNPQEFKEEFAKAWFKLTHRDMGPKSRYIGPWIPEQNFIWQDPVPVADYKQVSAQDIAQLKQDIINSGLTNQQLIRTAWDSASTYRKTDYRGGSNGARIALAPEKDWQMNEPAKLEVVLAKLKEIQTNFNNNKTDGTKVSLADLIVLGGNVGVEQAAKEAGYTIEIPFVPGRTDATQAQTDIESFNYLKTKADGFVNYSDGSLASNKLPQALVEKASMLNLNIPEMTVLVGGMRALNVNYDDSQEGVFTKTPGQLNNNFFVNLLDMSTKWEKSDTNSGEYIGIDRKTGAQKWTATSVDLIFGSNSELKAVAQVYAENGNEQKFVNDFAKAWHKVMMLGRFDVQE.

The first 23 residues, 1-23, serve as a signal peptide directing secretion; the sequence is MLKKIVTALGMSGMLLAANSAIA. A cross-link (tryptophyl-tyrosyl-methioninium (Trp-Tyr) (with M-247)) is located at residues 100 to 221; sequence WHDAGTYRLA…YAATQMGLIY (122 aa). Histidine 101 functions as the Proton acceptor in the catalytic mechanism. The tryptophyl-tyrosyl-methioninium (Tyr-Met) (with W-100) cross-link spans 221–247; that stretch reads YVNPEGPDGKPDIKGAASEIRQAFRAM. Histidine 262 contributes to the heme b binding site.

This sequence belongs to the peroxidase family. Peroxidase/catalase subfamily. As to quaternary structure, homodimer or homotetramer. It depends on heme b as a cofactor. Post-translationally, formation of the three residue Trp-Tyr-Met cross-link is important for the catalase, but not the peroxidase activity of the enzyme.

It catalyses the reaction H2O2 + AH2 = A + 2 H2O. It carries out the reaction 2 H2O2 = O2 + 2 H2O. In terms of biological role, bifunctional enzyme with both catalase and broad-spectrum peroxidase activity. The chain is Catalase-peroxidase from Francisella philomiragia subsp. philomiragia (strain ATCC 25017 / CCUG 19701 / FSC 153 / O#319-036).